The primary structure comprises 133 residues: Nickel-responsive regulator (133 aa).

Ni(2+) contacts are provided by histidine 76, histidine 87, histidine 89, and cysteine 95.

The protein belongs to the transcriptional regulatory CopG/NikR family. Homotetramer. It depends on Ni(2+) as a cofactor.

Transcriptional repressor of the nikABCDE operon. Is active in the presence of excessive concentrations of intracellular nickel. The sequence is that of Nickel-responsive regulator from Enterobacter sp. (strain 638).